A 423-amino-acid chain; its full sequence is MSLSLPPALSELARALPYSRTQWLPILVGFLIGYPLLIKALRYKRLGEMKKKFYFPTRESMAEMTDEEAFLIQKEMAQLEFPFMFLTSGQFALFRTYGIPTISHLLTKTGQFSKPETSFKRYTDTAALIGEMVENSPTSQRAFISVARTRFLHSGYQASGKILDADLLYTLALFAVQPVRFIENFEWRTLSDLELCAIGTFWKSLGDALGISSEILPSGKTGFKDGIQWLEEVDVWSQDYEAKYMVPDPKNRESADQATAVLLYNLPKILHPIGLQFTSYMMDDRLRKAMLYEAPSPGWSAVFSSLLATRKFVLRYLSPPRPAALAVSNIAQKPDKDDRYHRMSWDALPFYIRPTFWNRWGPMAWISWLMAHPVPGDHGQKYYPQGYHIQDIGPKYFEGKGHKEIQEMMKELKISRTGKCPFH.

At 1-22 (MSLSLPPALSELARALPYSRTQ) the chain is on the lumenal side. A helical membrane pass occupies residues 23 to 41 (WLPILVGFLIGYPLLIKAL). Residues 42–423 (RYKRLGEMKK…ISRTGKCPFH (382 aa)) are Cytoplasmic-facing.

This sequence belongs to the mpaB oxygenase family.

The protein resides in the endoplasmic reticulum membrane. It catalyses the reaction 4-farnesyl-3,5-dihydroxy-6-methylphthalide + AH2 + 2 O2 = (4E,8E)-10-(4,6-dihydroxy-7-methyl-3-oxo-1,3-dihydro-2-benzofuran-5-yl)-4,8-dimethyldeca-4,8-dienoate + acetone + A + H2O + H(+). The protein operates within secondary metabolite biosynthesis; terpenoid biosynthesis. Functionally, ER-bound oxygenase; part of the gene cluster that mediates the biosynthesis of mycophenolic acid (MPA), the first isolated antibiotic natural product in the world obtained from a culture of Penicillium brevicompactum in 1893. MpaB' catalyzes the oxidative cleavage the C19-C20 double bond in farnesyl-DHMP (FDHMP) to yield FDHMP-3C via a mycophenolic aldehyde intermediate. The first step of the pathway is the synthesis of 5-methylorsellinic acid (5MOA) by the cytosolic polyketide synthase mpaC. 5MOA is then converted to the phthalide compound 5,7-dihydroxy-4,6-dimethylphthalide (DHMP) by the endoplasmic reticulum-bound cytochrome P450 monooxygenase mpaDE. MpaDE first catalyzes hydroxylation of 5-MOA to 4,6-dihydroxy-2-(hydroxymethyl)-3-methylbenzoic acid (DHMB). MpaDE then acts as a lactone synthase that catalyzes the ring closure to convert DHMB into DHMP. The next step is the prenylation of DHMP by the Golgi apparatus-associated prenyltransferase mpaA to yield farnesyl-DHMP (FDHMP). The ER-bound oxygenase mpaB then mediates the oxidative cleavage the C19-C20 double bond in FDHMP to yield FDHMP-3C via a mycophenolic aldehyde intermediate. The O-methyltransferase mpaG catalyzes the methylation of FDHMP-3C to yield MFDHMP-3C. After the cytosolic methylation of FDHMP-3C, MFDHMP-3C enters into peroxisomes probably via free diffusion due to its low molecular weight. Upon a peroxisomal CoA ligation reaction, catalyzed by a beta-oxidation component enzyme acyl-CoA ligase ACL891, MFDHMP-3C-CoA would then be restricted to peroxisomes for the following beta-oxidation pathway steps. The peroxisomal beta-oxidation machinery than converts MFDHMP-3C-CoA into MPA_CoA, via a beta-oxidation chain-shortening process. Finally mpaH acts as a peroxisomal acyl-CoA hydrolase with high substrate specificity toward MPA-CoA to release the final product MPA. This chain is ER-bound oxygenase mpaB', found in Penicillium brevicompactum.